We begin with the raw amino-acid sequence, 243 residues long: 1-(5-phosphoribosyl)-5-[(5-phosphoribosylamino)methylideneamino] imidazole-4-carboxamide isomerase (243 aa).

D8 (proton acceptor) is an active-site residue. Catalysis depends on D130, which acts as the Proton donor.

Belongs to the HisA/HisF family.

The protein localises to the cytoplasm. It catalyses the reaction 1-(5-phospho-beta-D-ribosyl)-5-[(5-phospho-beta-D-ribosylamino)methylideneamino]imidazole-4-carboxamide = 5-[(5-phospho-1-deoxy-D-ribulos-1-ylimino)methylamino]-1-(5-phospho-beta-D-ribosyl)imidazole-4-carboxamide. It participates in amino-acid biosynthesis; L-histidine biosynthesis; L-histidine from 5-phospho-alpha-D-ribose 1-diphosphate: step 4/9. This Acinetobacter baumannii (strain SDF) protein is 1-(5-phosphoribosyl)-5-[(5-phosphoribosylamino)methylideneamino] imidazole-4-carboxamide isomerase.